We begin with the raw amino-acid sequence, 316 residues long: Glutathione synthetase (316 aa).

Residues 123–309 (NEKISTLSFK…ISGILLDSIE (187 aa)) enclose the ATP-grasp domain. 149-206 (FQEKFGDIILKPINKMGGDSVFYVKKNDPNVSVIIDQLTNYGNSFCLIQEYIKEILNG) lines the ATP pocket. Residues glutamate 280 and asparagine 282 each contribute to the Mg(2+) site.

This sequence belongs to the prokaryotic GSH synthase family. The cofactor is Mg(2+). Mn(2+) serves as cofactor.

The catalysed reaction is gamma-L-glutamyl-L-cysteine + glycine + ATP = glutathione + ADP + phosphate + H(+). It participates in sulfur metabolism; glutathione biosynthesis; glutathione from L-cysteine and L-glutamate: step 2/2. This chain is Glutathione synthetase, found in Wigglesworthia glossinidia brevipalpis.